A 660-amino-acid chain; its full sequence is Squalene--hopene cyclase (660 aa).

The stretch at 73–114 (EAKIGNYLRRVQGAHGGWPLVHDGEFDMSASVKAYFALKMIG) is one PFTB 1 repeat. Aspartate 394 serves as the catalytic Proton donor. PFTB repeat units lie at residues 419 to 460 (IDRG…GALL) and 536 to 586 (IRKA…ALMA).

This sequence belongs to the terpene cyclase/mutase family.

The protein localises to the cell membrane. The enzyme catalyses squalene = hop-22(29)-ene. It carries out the reaction squalene + H2O = hopan-22-ol. It participates in secondary metabolite biosynthesis; hopanoid biosynthesis. Functionally, catalyzes the cyclization of squalene into hopene. This chain is Squalene--hopene cyclase (shc), found in Bradyrhizobium diazoefficiens (strain JCM 10833 / BCRC 13528 / IAM 13628 / NBRC 14792 / USDA 110).